The chain runs to 326 residues: Negative regulator of the PHO system (326 aa).

Positions 8–290 (FQQLEKLGEG…ARQALQHPWF (283 aa)) constitute a Protein kinase domain. Residues 14–22 (LGEGTYATV) and K37 each bind ATP. The Proton acceptor role is filled by D131. A disordered region spans residues 300–326 (PQHLSDPYQQQQQQQQHPHQPIIDQQY). The segment covering 305–326 (DPYQQQQQQQQHPHQPIIDQQY) has biased composition (low complexity).

Belongs to the protein kinase superfamily. CMGC Ser/Thr protein kinase family. CDC2/CDKX subfamily. As to quaternary structure, interacts with a number of cyclins.

The catalysed reaction is L-seryl-[protein] + ATP = O-phospho-L-seryl-[protein] + ADP + H(+). It carries out the reaction L-threonyl-[protein] + ATP = O-phospho-L-threonyl-[protein] + ADP + H(+). In terms of biological role, when phosphate concentrations are high it phosphorylates the PHO4 transcription factor thus establishing repression. The protein is Negative regulator of the PHO system (PHO85) of Candida albicans (Yeast).